The following is a 955-amino-acid chain: Beta-agarase B (955 aa).

Belongs to the glycosyl hydrolase 50 family.

The catalysed reaction is Hydrolysis of (1-&gt;4)-beta-D-galactosidic linkages in agarose, giving the tetramer as the predominant product.. In terms of biological role, hydrolyzes agarose to yield predominantly neoagarotetraose and neoagarohexaose. The polypeptide is Beta-agarase B (agaB) (Vibrio sp. (strain JT0107)).